The chain runs to 312 residues: tRNA dimethylallyltransferase (312 aa).

Position 11–18 (11–18 (GPTAVGKT)) interacts with ATP. 13-18 (TAVGKT) is a substrate binding site. The segment at 159–163 (QRVLR) is interaction with substrate tRNA.

Belongs to the IPP transferase family. Monomer. It depends on Mg(2+) as a cofactor.

It catalyses the reaction adenosine(37) in tRNA + dimethylallyl diphosphate = N(6)-dimethylallyladenosine(37) in tRNA + diphosphate. Functionally, catalyzes the transfer of a dimethylallyl group onto the adenine at position 37 in tRNAs that read codons beginning with uridine, leading to the formation of N6-(dimethylallyl)adenosine (i(6)A). The sequence is that of tRNA dimethylallyltransferase from Macrococcus caseolyticus (strain JCSC5402) (Macrococcoides caseolyticum).